Reading from the N-terminus, the 260-residue chain is MTTFPFLFIVLRFYTLMFPVKIFLKLLRGDDMEIQTLVRSDKKLTPENVREFLKENYPEKYKLIENWEELQGEFDVQKLGGNEYLVIYRIPEKEFEKELGIFQSVEEAMGAFLSTALEHGWEEVPKNYVIYHADFVEGGNKLIAAIKTEEGISTYDQLKLEEMMKKMVRYPRVVVYSSDVLTYIKDIYPDVQSKAYVIAREIAKETGSAPELEELGKIYGVDTSTLEGKLELIEKLLQNPVKLPGGKEVNLKPYWYPLEA.

This is an uncharacterized protein from Aquifex aeolicus (strain VF5).